Here is a 362-residue protein sequence, read N- to C-terminus: sn-glycerol-3-phosphate import ATP-binding protein UgpC (362 aa).

An ABC transporter domain is found at 4-235; it reads LTLQSVKKTY…PATVFVASFI (232 aa). Residue 37 to 44 participates in ATP binding; it reads GPSGCGKS.

Belongs to the ABC transporter superfamily. sn-glycerol-3-phosphate importer (TC 3.A.1.1.3) family. The complex is composed of two ATP-binding proteins (UgpC), two transmembrane proteins (UgpA and UgpE) and a solute-binding protein (UgpB).

The protein localises to the cell inner membrane. The enzyme catalyses sn-glycerol 3-phosphate(out) + ATP + H2O = sn-glycerol 3-phosphate(in) + ADP + phosphate + H(+). In terms of biological role, part of the ABC transporter complex UgpBAEC involved in sn-glycerol-3-phosphate (G3P) import. Responsible for energy coupling to the transport system. The sequence is that of sn-glycerol-3-phosphate import ATP-binding protein UgpC from Paraburkholderia xenovorans (strain LB400).